We begin with the raw amino-acid sequence, 1480 residues long: Nonribosomal peptide synthetase inpA (1480 aa).

Over residues 1 to 17 the composition is skewed to low complexity; the sequence is MSHSMSSSSSSSSSSSS. Positions 1-24 are disordered; the sequence is MSHSMSSSSSSSSSSSSSRDEGQS. Residues 44–458 are condensation; sequence VQDVYPCTPL…QLISPQDLDQ (415 aa). Positions 479-871 are adenylation; it reads QRHIDTRPDA…GRKDSQVKIR (393 aa). The 80-residue stretch at 1003–1082 folds into the Carrier domain; that stretch reads DSTNKVALRL…GLAAMITSPH (80 aa). Serine 1041 is modified (O-(pantetheine 4'-phosphoryl)serine). A thioesterase (TE) domain region spans residues 1117-1436; that stretch reads KVFLTGATGL…VLAMLQDPQM (320 aa).

The protein belongs to the NRP synthetase family.

Its pathway is secondary metabolite biosynthesis. Functionally, nonribosomal peptide synthetase; part of the inp gene cluster that mediates the biosynthesis of fellutamide B, a mycotoxin that acts as a proteasome inhibitor. In the first step of fellutabmide B biosynthesis, inpC activates 3-hydroxydodecanoic acid to generate 3-hydroxydodecanoyl-AMP that is then loaded onto the T0 domain of inpB. The 3-hydroxydodecanoyl-S-phosphopantetheinyl-T0 is sequentially extended with L-Asn and L-Gln by the two CAT modules of inpB. The linear lipodipeptide from inpB is then transferred onto inpA for the addition of the third amino acid, L-Leu. Reductive releasing of the lipotripeptide by the TE domain of inpA produces (2S)-fellutamide B. InpF might be involved in the release and transfer of the lipodipeptide from inpB to inpA. The inp cluster-encoded proteasome subunit inpE confers resistance to internally produced fellutamides. The MFS efflux transporter inpD may contribute to fellutamide resistance as well. In Emericella nidulans (strain FGSC A4 / ATCC 38163 / CBS 112.46 / NRRL 194 / M139) (Aspergillus nidulans), this protein is Nonribosomal peptide synthetase inpA.